The sequence spans 72 residues: Lantibiotic Flvbeta.e (72 aa).

Residues 1-34 (MNNKEFNMEQFKKLAAVVSEDELDEMLDENVTGA) constitute a propeptide, cleaved by FlvT. Positions 36 to 40 (SSIPC) form a cross-link, lanthionine (Ser-Cys); by FlvM2. A 2,3-didehydroalanine (Ser); by FlvM2 modification is found at Ser37. Residues Thr48 and Thr49 each carry the 2,3-didehydrobutyrine; by FlvM2 modification. 3 cross-links (beta-methyllanthionine (Thr-Cys); by FlvM2) span residues 55–61 (TTGFDWC), 63–66 (TGAC), and 67–70 (TTSC).

Post-translationally, contains LL-lanthionine and DL-beta-methyllanthionine, when coepressed in E.coli with the flavecin synthetase FlvM2.

The protein localises to the secreted. Its function is as follows. Lanthionine-containing peptide antibiotic (lantibiotic) that is probably active on Gram-positive bacteria, since its analog [Del1]Flvbeta.e shows antibacterial activity against Gram-positive bacteria. This activity is not synergistically enhanced by [Del2]Flvalpha.a, an analog of Flvalpha.a, which is encoded by the same operon than Flvbeta.e. The bactericidal activity of lantibiotics is based on depolarization of energized bacterial cytoplasmic membranes, initiated by the formation of aqueous transmembrane pores. The polypeptide is Lantibiotic Flvbeta.e (Ruminococcus flavefaciens).